A 590-amino-acid polypeptide reads, in one-letter code: G protein-coupled receptor kinase 5 (590 aa).

The segment at 1–185 is N-terminal; that stretch reads MELENIVANT…LERQPVTKNT (185 aa). The tract at residues 20-39 is interaction with calmodulin; that stretch reads GGKRKGKSKKWKEILKFPHI. The RGS domain maps to 53–171; sequence YYSLCDKQPI…LDSMYFDRFL (119 aa). Ser-136 is subject to Phosphoserine. Residues 186–448 enclose the Protein kinase domain; that stretch reads FRQYRVLGKG…AAEVKRHPFF (263 aa). ATP is bound by residues 192–200 and Lys-215; that span reads LGKGGFGEV. The active-site Proton acceptor is the Asp-311. Residues 388–395 carry the Nuclear localization signal motif; it reads RKEKVKRE. The 66-residue stretch at 449-514 folds into the AGC-kinase C-terminal domain; it reads RNMNFKRLEA…GSVPIPWQNE (66 aa). Ser-484 bears the Phosphoserine; by autocatalysis mark. Residue Thr-485 is modified to Phosphothreonine; by autocatalysis. The segment at 546–565 is sufficient for membrane localization; the sequence is PKKGLFHRLFRRQHQSNSKS. Residues 557–590 are disordered; sequence RQHQSNSKSSPTPKTSCNHRINSNHINSNSTGSS. Over residues 561-590 the composition is skewed to low complexity; it reads SNSKSSPTPKTSCNHRINSNHINSNSTGSS. Ser-579 is modified (phosphoserine).

It belongs to the protein kinase superfamily. AGC Ser/Thr protein kinase family. GPRK subfamily. Interacts with ST13 (via the C-terminus 303-319 AA). Interacts with TP53/p53. Interacts with HTR4 (via C-terminus 330-346 AA); this interaction is promoted by 5-HT (serotonin). Interacts with HDAC5. Interacts with GIT1. Autophosphorylated. Autophosphorylation may play a critical role in the regulation of GRK5 kinase activity.

Its subcellular location is the cytoplasm. The protein resides in the nucleus. The protein localises to the cell membrane. It catalyses the reaction [G-protein-coupled receptor] + ATP = [G-protein-coupled receptor]-phosphate + ADP + H(+). Inhibited by calmodulin with an IC(50) of 50 nM. Calmodulin inhibits GRK5 association with receptor and phospholipid. Functionally, serine/threonine kinase that phosphorylates preferentially the activated forms of a variety of G-protein-coupled receptors (GPCRs). Such receptor phosphorylation initiates beta-arrestin-mediated receptor desensitization, internalization, and signaling events leading to their down-regulation. Phosphorylates a variety of GPCRs, including adrenergic receptors, muscarinic acetylcholine receptors (more specifically Gi-coupled M2/M4 subtypes), dopamine receptors and opioid receptors. In addition to GPCRs, also phosphorylates various substrates: Hsc70-interacting protein/ST13, TP53/p53, HDAC5, and arrestin-1/ARRB1. Phosphorylation of ARRB1 by GRK5 inhibits G-protein independent MAPK1/MAPK3 signaling downstream of 5HT4-receptors. Phosphorylation of HDAC5, a repressor of myocyte enhancer factor 2 (MEF2) leading to nuclear export of HDAC5 and allowing MEF2-mediated transcription. Phosphorylation of TP53/p53, a crucial tumor suppressor, inhibits TP53/p53-mediated apoptosis. Phosphorylation of ST13 regulates internalization of the chemokine receptor. Phosphorylates rhodopsin (RHO) (in vitro) and a non G-protein-coupled receptor, LRP6 during Wnt signaling (in vitro). The sequence is that of G protein-coupled receptor kinase 5 (Grk5) from Mus musculus (Mouse).